Consider the following 323-residue polypeptide: tRNA(Ile)-lysidine synthase (323 aa).

Position 33 to 38 (33 to 38 (SGGPDS)) interacts with ATP.

This sequence belongs to the tRNA(Ile)-lysidine synthase family.

It localises to the cytoplasm. It catalyses the reaction cytidine(34) in tRNA(Ile2) + L-lysine + ATP = lysidine(34) in tRNA(Ile2) + AMP + diphosphate + H(+). Functionally, ligates lysine onto the cytidine present at position 34 of the AUA codon-specific tRNA(Ile) that contains the anticodon CAU, in an ATP-dependent manner. Cytidine is converted to lysidine, thus changing the amino acid specificity of the tRNA from methionine to isoleucine. This chain is tRNA(Ile)-lysidine synthase, found in Mycobacterium bovis (strain ATCC BAA-935 / AF2122/97).